The sequence spans 236 residues: Putative N-acetylmannosamine-6-phosphate 2-epimerase (236 aa).

This sequence belongs to the NanE family.

It catalyses the reaction an N-acyl-D-glucosamine 6-phosphate = an N-acyl-D-mannosamine 6-phosphate. It functions in the pathway amino-sugar metabolism; N-acetylneuraminate degradation; D-fructose 6-phosphate from N-acetylneuraminate: step 3/5. In terms of biological role, converts N-acetylmannosamine-6-phosphate (ManNAc-6-P) to N-acetylglucosamine-6-phosphate (GlcNAc-6-P). This Listeria welshimeri serovar 6b (strain ATCC 35897 / DSM 20650 / CCUG 15529 / CIP 8149 / NCTC 11857 / SLCC 5334 / V8) protein is Putative N-acetylmannosamine-6-phosphate 2-epimerase.